A 232-amino-acid chain; its full sequence is Rhamnogalacturonan acetylesterase RhgT (232 aa).

S14 serves as the catalytic Nucleophile. Residues E191 and H195 contribute to the active site.

Belongs to the 'GDSL' lipolytic enzyme family. Monomer.

With respect to regulation, almost completely inhibited by diethylpyrocarbonate at 5 mM and completely inhibited by phenylmethylsulfonyl fluoride (PMSF) at 50 mM. Dimethyl phosphite achieves only a 53% inhibition. Also inhibited by metal ions (magnesium, manganese and calcium) and chelating agent (EDTA) at the same level. May play a role in the degradation of type I rhamnogalacturonan derived from plant cell walls. This enzyme has a broad substrate specificity, and shows strong preference for glucose pentaacetate, beta-naphthylacetate, and p-nitrophenyl acetate (pNPA). Also active toward acetylated xylan. The chain is Rhamnogalacturonan acetylesterase RhgT (rhgT) from Bacillus subtilis (strain 168).